Here is a 408-residue protein sequence, read N- to C-terminus: Multidrug resistance protein MdtG (408 aa).

A run of 11 helical transmembrane segments spans residues 16–36, 58–78, 92–112, 115–135, 146–166, 173–193, 224–244, 256–276, 290–310, 319–339, and 378–398; these read LIVA…VMPF, IVFS…GGLA, LGMG…QFLI, ALLG…ATQV, TLST…GLLA, PVFF…LFCI, LFVT…ILTL, VAFI…LSAP, ILIT…YVQT, FLLG…LVYN, and AVFL…WNSL.

The protein belongs to the major facilitator superfamily. DHA1 family. MdtG (TC 2.A.1.2.20) subfamily.

It localises to the cell inner membrane. Functionally, confers resistance to fosfomycin and deoxycholate. In Escherichia coli (strain 55989 / EAEC), this protein is Multidrug resistance protein MdtG.